Consider the following 197-residue polypeptide: Dehydrin DHN1 (197 aa).

Residues 1 to 14 (MSQYQNQYGAQTGM) show a composition bias toward polar residues. 2 disordered regions span residues 1–86 (MSQY…GTNP) and 133–197 (GTEQ…CTGH). Tandem repeats lie at residues 16–21 (DEYGNP) and 26–31 (DQYGNP). The interval 16 to 31 (DEYGNPVNQVDQYGNP) is 2 X approximate repeats. The segment covering 74 to 83 (THTGGVGGYG) has biased composition (gly residues). The stretch at 126–133 (KIKEKIPG) is one 2-1 repeat. The interval 126-190 (KIKEKIPGTE…MDKIKEKLPG (65 aa)) is 2 X approximate repeats. A compositionally biased stretch (gly residues) spans 144–160 (AGYGSTGYGASGGGIGN). Over residues 165–188 (YVREEHRVDHGEKKGIMDKIKEKL) the composition is skewed to basic and acidic residues. The 2-2 repeat unit spans residues 183–190 (KIKEKLPG).

The protein belongs to the plant dehydrin family. In terms of tissue distribution, shoots, roots, and cotyledon from dehydrating seedlings.

The sequence is that of Dehydrin DHN1 (DHN1) from Pisum sativum (Garden pea).